The following is a 120-amino-acid chain: Holo-[acyl-carrier-protein] synthase (120 aa).

Residues Asp-6 and Glu-55 each contribute to the Mg(2+) site.

This sequence belongs to the P-Pant transferase superfamily. AcpS family. Mg(2+) is required as a cofactor.

The protein localises to the cytoplasm. It catalyses the reaction apo-[ACP] + CoA = holo-[ACP] + adenosine 3',5'-bisphosphate + H(+). Functionally, transfers the 4'-phosphopantetheine moiety from coenzyme A to a Ser of acyl-carrier-protein. The polypeptide is Holo-[acyl-carrier-protein] synthase (Pelodictyon phaeoclathratiforme (strain DSM 5477 / BU-1)).